We begin with the raw amino-acid sequence, 619 residues long: Translation initiation factor IF-2 (619 aa).

Composition is skewed to low complexity over residues 1 to 18 and 98 to 111; these read MTLN…TTPK and PPQL…LTKT. 2 disordered regions span residues 1–24 and 90–113; these read MTLN…KETD and SEPQ…KTKP. In terms of domain architecture, tr-type G spans 121-289; that stretch reads KKSPIVTIMG…ILLVSEIQNL (169 aa). Residues 130–137 form a G1 region; sequence GHVDHGKT. Residue 130–137 participates in GTP binding; that stretch reads GHVDHGKT. The interval 155–159 is G2; the sequence is GITQH. A G3 region spans residues 176–179; sequence DTPG. GTP-binding positions include 176–180 and 230–233; these read DTPGH and NKID. A G4 region spans residues 230-233; sequence NKID. Residues 266 to 268 are G5; it reads SAL.

Belongs to the TRAFAC class translation factor GTPase superfamily. Classic translation factor GTPase family. IF-2 subfamily.

The protein localises to the cytoplasm. Functionally, one of the essential components for the initiation of protein synthesis. Protects formylmethionyl-tRNA from spontaneous hydrolysis and promotes its binding to the 30S ribosomal subunits. Also involved in the hydrolysis of GTP during the formation of the 70S ribosomal complex. The polypeptide is Translation initiation factor IF-2 (Onion yellows phytoplasma (strain OY-M)).